We begin with the raw amino-acid sequence, 425 residues long: uncharacterized protein (425 aa).

The F-box domain occupies 2–53; it reads SFNLLDLPIVPRQKALKYLEPIDLFELSLCSKRMAQSVRDLKIEASAHFITL.

This is an uncharacterized protein from Caenorhabditis elegans.